We begin with the raw amino-acid sequence, 22 residues long: Magnificalysin II (22 aa).

The tract at residues 3 to 12 is plays an important role in the hemolytic activity; it reads ALAGTIIDGA. The segment at 11 to 22 is N-terminal region; that stretch reads GASLGFDILNKV.

Belongs to the actinoporin family. Sea anemone subfamily. Octamer or nonamer in membranes. Monomer in the soluble state.

It localises to the secreted. It is found in the nematocyst. The protein resides in the target cell membrane. Functionally, pore-forming protein that forms cations-selective hydrophilic pores of around 1 nm and causes cytolysis. Pore formation is a multi-step process that involves specific recognition of membrane sphingomyelin (but neither cholesterol nor phosphatidylcholine) using aromatic rich region and adjacent phosphocholine (POC) binding site, firm binding to the membrane (mainly driven by hydrophobic interactions) accompanied by the transfer of the N-terminal region to the lipid-water interface and finally pore formation after oligomerization of monomers. In Heteractis magnifica (Magnificent sea anemone), this protein is Magnificalysin II.